Consider the following 345-residue polypeptide: NADPH dehydrogenase (345 aa).

23-26 (SPMC) provides a ligand contact to FMN. Substrate is bound at residue tyrosine 28. Positions 60 and 102 each coordinate FMN. 164-167 (HGAH) provides a ligand contact to substrate. FMN contacts are provided by residues arginine 215 and 307-308 (GR).

It belongs to the NADH:flavin oxidoreductase/NADH oxidase family. NamA subfamily. As to quaternary structure, homotetramer. FMN is required as a cofactor.

It carries out the reaction A + NADPH + H(+) = AH2 + NADP(+). Functionally, catalyzes the reduction of the double bond of an array of alpha,beta-unsaturated aldehydes and ketones. It also reduces the nitro group of nitroester and nitroaromatic compounds. It could have a role in detoxification processes. The polypeptide is NADPH dehydrogenase (Bacillus cereus (strain ATCC 10987 / NRS 248)).